The primary structure comprises 447 residues: Omega-3 fatty acid desaturase, chloroplastic (447 aa).

The Histidine box-1 signature appears at 167–171 (HDCGH). A Histidine box-2 motif is present at residues 203 to 207 (HRTHH). The Histidine box-3 signature appears at 370–374 (HVIHH).

The protein belongs to the fatty acid desaturase type 1 family.

Its subcellular location is the plastid. The protein resides in the chloroplast membrane. It functions in the pathway lipid metabolism; polyunsaturated fatty acid biosynthesis. Functionally, chloroplast omega-3 fatty acid desaturase introduces the third double bond in the biosynthesis of 16:3 and 18:3 fatty acids, important constituents of plant membranes. It is thought to use ferredoxin as an electron donor and to act on fatty acids esterified to galactolipids, sulfolipids and phosphatidylglycerol. The protein is Omega-3 fatty acid desaturase, chloroplastic (FAD7) of Sesamum indicum (Oriental sesame).